A 92-amino-acid chain; its full sequence is UPF0223 protein SGO_1052 (92 aa).

Belongs to the UPF0223 family.

The chain is UPF0223 protein SGO_1052 from Streptococcus gordonii (strain Challis / ATCC 35105 / BCRC 15272 / CH1 / DL1 / V288).